Reading from the N-terminus, the 189-residue chain is Potassium-transporting ATPase KdpC subunit (189 aa).

The helical transmembrane segment at 8-28 (LVMLILLTLITGIAYPLLTTG) threads the bilayer.

It belongs to the KdpC family. In terms of assembly, the system is composed of three essential subunits: KdpA, KdpB and KdpC.

The protein localises to the cell inner membrane. Part of the high-affinity ATP-driven potassium transport (or Kdp) system, which catalyzes the hydrolysis of ATP coupled with the electrogenic transport of potassium into the cytoplasm. This subunit acts as a catalytic chaperone that increases the ATP-binding affinity of the ATP-hydrolyzing subunit KdpB by the formation of a transient KdpB/KdpC/ATP ternary complex. The protein is Potassium-transporting ATPase KdpC subunit of Serratia proteamaculans (strain 568).